The following is a 153-amino-acid chain: Melatonin receptor type 1A X2.0 (153 aa).

The Cytoplasmic portion of the chain corresponds to 1 to 12; it reads HSSWYNRLFSNS. The chain crosses the membrane as a helical span at residues 13-33; it reads GTICYVGLVWVLALGAILPNL. Residues 34–57 lie on the Extracellular side of the membrane; sequence FVGSLRCDPRIFSCTFAQYVSSYY. A helical membrane pass occupies residues 58–78; it reads TIAVVIFHFFLPIGVVSYCYL. Over 79 to 112 the chain is Cytoplasmic; the sequence is RIWVLVLNIRHRVKPDRHLHHQTWPYNIHGFITM. A helical transmembrane segment spans residues 113-133; it reads FVVFVLFAVCWGPLNIIGLTV. Residues 134–145 lie on the Extracellular side of the membrane; it reads AIYPPLGDSIPQ. A helical membrane pass occupies residues 146-153; the sequence is WLFVASYF.

This sequence belongs to the G-protein coupled receptor 1 family.

It localises to the cell membrane. In terms of biological role, high affinity receptor for melatonin. The activity of this receptor is mediated by pertussis toxin sensitive G proteins that inhibits adenylate cyclase activity. This Xenopus laevis (African clawed frog) protein is Melatonin receptor type 1A X2.0.